Reading from the N-terminus, the 471-residue chain is GDP-mannose transporter (471 aa).

The segment covering 1 to 13 (MSSGSRSFFTPQE) has biased composition (polar residues). The interval 1–52 (MSSGSRSFFTPQETRLELPQGAAHQTPDITRPASPSENDRAPFLNGGPSDAR) is disordered. Over 1–70 (MSSGSRSFFT…ALRNDSEKPA (70 aa)) the chain is Cytoplasmic. The chain crosses the membrane as a helical span at residues 71-91 (VGIMALAPILCYCAASITMTV). At 92–101 (VNKFTVSGRG) the chain is on the lumenal side. Residues 102–122 (FNMNLLVLLIQSTVGVTCVWI) form a helical membrane-spanning segment. Over 123–139 (AERAGLIQLRGLNAKDA) the chain is Cytoplasmic. A helical membrane pass occupies residues 140–160 (WNWMPLSIMLVFVIWTGSKAL). The Lumenal portion of the chain corresponds to 161–166 (QYLNIS). Asn164 carries an N-linked (GlcNAc...) asparagine glycan. The chain crosses the membrane as a helical span at residues 167-187 (VYTIFKNLTIILIAYGEVMWF). Residues 188–193 (GGRVTR) lie on the Cytoplasmic side of the membrane. The chain crosses the membrane as a helical span at residues 194 to 214 (IVLCSFLFMVLSSVIAAWSDI). Residues 215-279 (SNVFAIGNLS…DVIEGFQGYG (65 aa)) lie on the Lumenal side of the membrane. Asn222 carries an N-linked (GlcNAc...) asparagine glycan. The helical transmembrane segment at 280–300 (LLSSGYVWMALNCICSATYVL) threads the bilayer. The Cytoplasmic segment spans residues 301-315 (LMRKRIKVTGFKDWD). A helical membrane pass occupies residues 316-336 (TMFYNNFLSIPVLLLMSFLVE). Over 337 to 354 (DWSYANLHKNFPDDKQTK) the chain is Lumenal. Residues 355–375 (LISAIVFSGACAILISYTTAW) traverse the membrane as a helical segment. Residues 376-383 (CIRATSST) lie on the Cytoplasmic side of the membrane. A helical membrane pass occupies residues 384 to 404 (TYSMVGALNKLPVALSGMVFF). Residues 405-408 (HDPP) are Lumenal-facing. The chain crosses the membrane as a helical span at residues 409-429 (VTFSSVSAIAVGFFAGLVYAF). The Cytoplasmic portion of the chain corresponds to 430-471 (GKNKQAEAAKLGGHASANGSSSMSGSKDGSSLPMHTFNDRKD). The span at 442-460 (GHASANGSSSMSGSKDGSS) shows a compositional bias: low complexity. Positions 442 to 471 (GHASANGSSSMSGSKDGSSLPMHTFNDRKD) are disordered.

This sequence belongs to the TPT transporter family. SLC35D subfamily. As to quaternary structure, homooligomer.

It localises to the golgi apparatus membrane. It is found in the cytoplasmic vesicle membrane. Its subcellular location is the endoplasmic reticulum membrane. Functionally, involved in the import of GDP-mannose from the cytoplasm into the Golgi lumen. The chain is GDP-mannose transporter (VRG4) from Mycosarcoma maydis (Corn smut fungus).